The following is a 493-amino-acid chain: Probable mannosyl-oligosaccharide alpha-1,2-mannosidase 1B (493 aa).

The first 18 residues, 1 to 18, serve as a signal peptide directing secretion; sequence MHLPSLSVALALVSSSLA. Residues asparagine 87 and asparagine 174 are each glycosylated (N-linked (GlcNAc...) asparagine). The cysteines at positions 324 and 353 are disulfide-linked. The active-site Proton donor is glutamate 367. Residue asparagine 489 is glycosylated (N-linked (GlcNAc...) asparagine).

This sequence belongs to the glycosyl hydrolase 47 family. As to quaternary structure, monomer. It depends on Ca(2+) as a cofactor. Mg(2+) serves as cofactor.

The protein resides in the cytoplasmic vesicle lumen. It carries out the reaction N(4)-(alpha-D-Man-(1-&gt;2)-alpha-D-Man-(1-&gt;2)-alpha-D-Man-(1-&gt;3)-[alpha-D-Man-(1-&gt;2)-alpha-D-Man-(1-&gt;3)-[alpha-D-Man-(1-&gt;2)-alpha-D-Man-(1-&gt;6)]-alpha-D-Man-(1-&gt;6)]-beta-D-Man-(1-&gt;4)-beta-D-GlcNAc-(1-&gt;4)-beta-D-GlcNAc)-L-asparaginyl-[protein] (N-glucan mannose isomer 9A1,2,3B1,2,3) + 4 H2O = N(4)-(alpha-D-Man-(1-&gt;3)-[alpha-D-Man-(1-&gt;3)-[alpha-D-Man-(1-&gt;6)]-alpha-D-Man-(1-&gt;6)]-beta-D-Man-(1-&gt;4)-beta-D-GlcNAc-(1-&gt;4)-beta-D-GlcNAc)-L-asparaginyl-[protein] (N-glucan mannose isomer 5A1,2) + 4 beta-D-mannose. The enzyme catalyses N(4)-(alpha-D-Man-(1-&gt;2)-alpha-D-Man-(1-&gt;2)-alpha-D-Man-(1-&gt;3)-[alpha-D-Man-(1-&gt;3)-[alpha-D-Man-(1-&gt;2)-alpha-D-Man-(1-&gt;6)]-alpha-D-Man-(1-&gt;6)]-beta-D-Man-(1-&gt;4)-beta-D-GlcNAc-(1-&gt;4)-beta-D-GlcNAc)-L-asparaginyl-[protein] (N-glucan mannose isomer 8A1,2,3B1,3) + 3 H2O = N(4)-(alpha-D-Man-(1-&gt;3)-[alpha-D-Man-(1-&gt;3)-[alpha-D-Man-(1-&gt;6)]-alpha-D-Man-(1-&gt;6)]-beta-D-Man-(1-&gt;4)-beta-D-GlcNAc-(1-&gt;4)-beta-D-GlcNAc)-L-asparaginyl-[protein] (N-glucan mannose isomer 5A1,2) + 3 beta-D-mannose. It participates in protein modification; protein glycosylation. Involved in the maturation of Asn-linked oligosaccharides. Progressively trims alpha-1,2-linked mannose residues from Man(9)GlcNAc(2) to produce Man(5)GlcNAc(2). This Aspergillus fumigatus (strain CBS 144.89 / FGSC A1163 / CEA10) (Neosartorya fumigata) protein is Probable mannosyl-oligosaccharide alpha-1,2-mannosidase 1B (mns1B).